The sequence spans 526 residues: Aspartate ammonia-lyase (526 aa).

The tract at residues 1-44 is disordered; sequence MSKTSNKSSADSKNDAKAEDIVNGENQIATNESQSSDSAAVSER. Residues 10–20 show a composition bias toward basic and acidic residues; the sequence is ADSKNDAKAED. The segment covering 24–39 has biased composition (polar residues); sequence GENQIATNESQSSDSA. L-aspartate is bound by residues Thr-155, Ser-194, Thr-195, Asn-196, and Thr-241. Positions 371 to 380 are SS loop; sequence GSSIMPAKVN. The Proton acceptor role is filled by Ser-372. Positions 373 and 378 each coordinate L-aspartate.

Belongs to the class-II fumarase/aspartase family. Aspartase subfamily. Homotetramer.

The catalysed reaction is L-aspartate = fumarate + NH4(+). Catalyzes the reversible conversion of L-aspartate to fumarate and ammonia. This is Aspartate ammonia-lyase from Corynebacterium glutamicum (strain ATCC 13032 / DSM 20300 / JCM 1318 / BCRC 11384 / CCUG 27702 / LMG 3730 / NBRC 12168 / NCIMB 10025 / NRRL B-2784 / 534).